The sequence spans 197 residues: Phospholipid hydroperoxide glutathione peroxidase (197 aa).

Serine 40 is modified (phosphoserine). Residue selenocysteine 73 is part of the active site. Position 73 (selenocysteine 73) is a non-standard amino acid, selenocysteine.

This sequence belongs to the glutathione peroxidase family. In terms of assembly, monomer. Has a tendency to form higher mass oligomers. Interacts with FUNDC1; this interaction promotes GPX4 recruitment into mitochondria through TOM/TIM complex where it is degraded by mitophagy.

Its subcellular location is the mitochondrion. The protein resides in the cytoplasm. It catalyses the reaction a hydroperoxy polyunsaturated fatty acid + 2 glutathione = a hydroxy polyunsaturated fatty acid + glutathione disulfide + H2O. It carries out the reaction 2 glutathione + H2O2 = glutathione disulfide + 2 H2O. The enzyme catalyses tert-butyl hydroperoxide + 2 glutathione = tert-butanol + glutathione disulfide + H2O. The catalysed reaction is cumene hydroperoxide + 2 glutathione = 2-phenylpropan-2-ol + glutathione disulfide + H2O. It catalyses the reaction (9S)-hydroperoxy-(10E,12Z)-octadecadienoate + 2 glutathione = (9S)-hydroxy-(10E,12Z)-octadecadienoate + glutathione disulfide + H2O. It carries out the reaction (13S)-hydroperoxy-(9Z,11E)-octadecadienoate + 2 glutathione = (13S)-hydroxy-(9Z,11E)-octadecadienoate + glutathione disulfide + H2O. The enzyme catalyses (5S)-hydroperoxy-(6E,8Z,11Z,14Z)-eicosatetraenoate + 2 glutathione = (5S)-hydroxy-(6E,8Z,11Z,14Z)-eicosatetraenoate + glutathione disulfide + H2O. The catalysed reaction is (12R)-hydroperoxy-(5Z,8Z,10E,14Z)-eicosatetraenoate + 2 glutathione = (12R)-hydroxy-(5Z,8Z,10E,14Z)-eicosatetraenoate + glutathione disulfide + H2O. It catalyses the reaction (12S)-hydroperoxy-(5Z,8Z,10E,14Z)-eicosatetraenoate + 2 glutathione = (12S)-hydroxy-(5Z,8Z,10E,14Z)-eicosatetraenoate + glutathione disulfide + H2O. It carries out the reaction (15S)-hydroperoxy-(5Z,8Z,11Z,13E)-eicosatetraenoate + 2 glutathione = (15S)-hydroxy-(5Z,8Z,11Z,13E)-eicosatetraenoate + glutathione disulfide + H2O. The enzyme catalyses (5S)-hydroperoxy-(6E,8Z,11Z,14Z,17Z)-eicosapentaenoate + 2 glutathione = (5S)-hydroxy-(6E,8Z,11Z,14Z,17Z)-eicosapentaenoate + glutathione disulfide + H2O. The catalysed reaction is (12S)-hydroperoxy-(5Z,8Z,10E,14Z,17Z)-eicosapentaenoate + 2 glutathione = (12S)-hydroxy-(5Z,8Z,10E,14Z,17Z)-eicosapentaenoate + glutathione disulfide + H2O. It catalyses the reaction (15S)-hydroperoxy-(5Z,8Z,11Z,13E,17Z)-eicosapentaenoate + 2 glutathione = (15S)-hydroxy-(5Z,8Z,11Z,13E,17Z)-eicosapentaenoate + glutathione disulfide + H2O. It carries out the reaction (15S)-hydroperoxy-(11Z,13E)-eicosadienoate + 2 glutathione = (15S)-hydroxy-(11Z,13E)-eicosadienoate + glutathione disulfide + H2O. The enzyme catalyses (17S)-hydroperoxy-(4Z,7Z,10Z,13Z,15E,19Z)-docosahexaenoate + 2 glutathione = (17S)-hydroxy-(4Z,7Z,10Z,13Z,15E,19Z)-docosahexaenoate + glutathione disulfide + H2O. The catalysed reaction is a hydroperoxy-1,2-diacyl-glycero-3-phosphocholine + 2 glutathione = a hydroxy-1,2-diacyl-glycero-3-phosphocholine + glutathione disulfide + H2O. Functionally, essential antioxidant peroxidase that directly reduces phospholipid hydroperoxide even if they are incorporated in membranes and lipoproteins. Can also reduce fatty acid hydroperoxide, cholesterol hydroperoxide and thymine hydroperoxide. Plays a key role in protecting cells from oxidative damage by preventing membrane lipid peroxidation. Required to prevent cells from ferroptosis, a non-apoptotic cell death resulting from an iron-dependent accumulation of lipid reactive oxygen species. The presence of selenocysteine (Sec) versus Cys at the active site is essential for life: it provides resistance to overoxidation and prevents cells against ferroptosis. The presence of Sec at the active site is also essential for the survival of a specific type of parvalbumin-positive interneurons, thereby preventing against fatal epileptic seizures. May be required to protect cells from the toxicity of ingested lipid hydroperoxides. Required for normal sperm development and male fertility. Essential for maturation and survival of photoreceptor cells. Plays a role in a primary T-cell response to viral and parasitic infection by protecting T-cells from ferroptosis and by supporting T-cell expansion. Plays a role of glutathione peroxidase in platelets in the arachidonic acid metabolism. Reduces hydroperoxy ester lipids formed by a 15-lipoxygenase that may play a role as down-regulator of the cellular 15-lipoxygenase pathway. Can also reduce small soluble hydroperoxides such as H2O2, cumene hydroperoxide and tert-butyl hydroperoxide. This Hylobates lar (Lar gibbon) protein is Phospholipid hydroperoxide glutathione peroxidase.